The sequence spans 362 residues: Probable choline-phosphate cytidylyltransferase (362 aa).

The span at 1-37 (MGEEGIKINDTHKRRIDEVEPSEKEDNVERQTKKYNF) shows a compositional bias: basic and acidic residues. Residues 1 to 79 (MGEEGIKIND…VSPVEEEPRD (79 aa)) are disordered. CTP contacts are provided by residues 109–117 (VFDLFHIGH) and Lys147. Residues Lys147 and Trp176 each coordinate substrate. CTP is bound by residues 193-194 (HD), Tyr198, and 221-225 (RTEGV). The segment at 308-362 (KNPLHGSSEPSSPGPTGFLGGINRWMQRRSSSHYDLPRVGNEIAASSSSATEENH) is disordered. Composition is skewed to low complexity over residues 313-323 (GSSEPSSPGPT) and 351-362 (AASSSSATEENH). A phosphoserine mark is found at Ser315 and Ser319. Thr323 carries the post-translational modification Phosphothreonine. Position 355 is a phosphoserine (Ser355).

Belongs to the cytidylyltransferase family.

Its subcellular location is the nucleus. The catalysed reaction is phosphocholine + CTP + H(+) = CDP-choline + diphosphate. This chain is Probable choline-phosphate cytidylyltransferase, found in Schizosaccharomyces pombe (strain 972 / ATCC 24843) (Fission yeast).